Consider the following 498-residue polypeptide: Phosphonates import ATP-binding protein PhnC (498 aa).

The interval 1–27 (MPQRPEAARAGPVAGPDAASKPAPGPA) is disordered. The region spanning 28 to 269 (LTLRGAGRAY…DLGELYEARR (242 aa)) is the ABC transporter domain. 60–67 (GPSGAGKS) contacts ATP. The interval 270-498 (GAADPARAPA…LEVARAEVPP (229 aa)) is lysR substrate binding domain.

Belongs to the ABC transporter superfamily. Phosphonates importer (TC 3.A.1.9.1) family. As to quaternary structure, the complex is composed of two ATP-binding proteins (PhnC), two transmembrane proteins (PhnE) and a solute-binding protein (PhnD).

It localises to the cell inner membrane. The enzyme catalyses phosphonate(out) + ATP + H2O = phosphonate(in) + ADP + phosphate + H(+). Its function is as follows. Part of the ABC transporter complex PhnCDE involved in phosphonates import. Responsible for energy coupling to the transport system. The chain is Phosphonates import ATP-binding protein PhnC from Anaeromyxobacter dehalogenans (strain 2CP-C).